The chain runs to 150 residues: Small ribosomal subunit protein uS7cz/uS7cy (150 aa).

It belongs to the universal ribosomal protein uS7 family. Part of the 30S ribosomal subunit.

The protein localises to the plastid. Its subcellular location is the chloroplast. In terms of biological role, one of the primary rRNA binding proteins, it binds directly to 16S rRNA where it nucleates assembly of the head domain of the 30S subunit. The polypeptide is Small ribosomal subunit protein uS7cz/uS7cy (rps7-A) (Adiantum capillus-veneris (Maidenhair fern)).